Consider the following 152-residue polypeptide: UPF0178 protein SaurJH9_0705 (152 aa).

It belongs to the UPF0178 family.

The polypeptide is UPF0178 protein SaurJH9_0705 (Staphylococcus aureus (strain JH9)).